Here is a 68-residue protein sequence, read N- to C-terminus: ATP synthase subunit c (68 aa).

A run of 2 helical transmembrane segments spans residues 5–25 (AAAIAIGLAALGAGLGNGMIV) and 47–67 (FIGVALVEAIPIIAAVIAFMV).

The protein belongs to the ATPase C chain family. As to quaternary structure, F-type ATPases have 2 components, F(1) - the catalytic core - and F(0) - the membrane proton channel. F(1) has five subunits: alpha(3), beta(3), gamma(1), delta(1), epsilon(1). F(0) has three main subunits: a(1), b(2) and c(10-14). The alpha and beta chains form an alternating ring which encloses part of the gamma chain. F(1) is attached to F(0) by a central stalk formed by the gamma and epsilon chains, while a peripheral stalk is formed by the delta and b chains.

The protein localises to the cell membrane. F(1)F(0) ATP synthase produces ATP from ADP in the presence of a proton or sodium gradient. F-type ATPases consist of two structural domains, F(1) containing the extramembraneous catalytic core and F(0) containing the membrane proton channel, linked together by a central stalk and a peripheral stalk. During catalysis, ATP synthesis in the catalytic domain of F(1) is coupled via a rotary mechanism of the central stalk subunits to proton translocation. Functionally, key component of the F(0) channel; it plays a direct role in translocation across the membrane. A homomeric c-ring of between 10-14 subunits forms the central stalk rotor element with the F(1) delta and epsilon subunits. The sequence is that of ATP synthase subunit c from Oceanobacillus iheyensis (strain DSM 14371 / CIP 107618 / JCM 11309 / KCTC 3954 / HTE831).